The following is a 141-amino-acid chain: Large ribosomal subunit protein uL11 (141 aa).

Belongs to the universal ribosomal protein uL11 family. Part of the ribosomal stalk of the 50S ribosomal subunit. Interacts with L10 and the large rRNA to form the base of the stalk. L10 forms an elongated spine to which L12 dimers bind in a sequential fashion forming a multimeric L10(L12)X complex. One or more lysine residues are methylated.

Its function is as follows. Forms part of the ribosomal stalk which helps the ribosome interact with GTP-bound translation factors. In Ligilactobacillus salivarius (strain UCC118) (Lactobacillus salivarius), this protein is Large ribosomal subunit protein uL11.